Reading from the N-terminus, the 670-residue chain is PML-RARA-regulated adapter molecule 1 (670 aa).

The segment at 1 to 561 (MAHHLPAAME…PQQLPPMDPK (561 aa)) is disordered. Over residues 31–43 (DLPKKPPKPEFGK) the composition is skewed to basic and acidic residues. Tandem repeats lie at residues 70-81 (KPPPPEVTDLPK), 82-93 (KPPPPEVTDLPK), 94-105 (KPPPPEVTDLPK), and 106-117 (KPPPPEVTDLPK). Residues 70–165 (KPPPPEVTDL…SLPEPGAPAR (96 aa)) are 4 X 12 AA repeats of K-P-P-[PQ]-P-[EQ]-[VAF]-T-D-L-P-K. Residues 114 to 129 (DLPKKPSKLELSDLSK) are compositionally biased toward basic and acidic residues. A Phosphoserine modification is found at serine 340. Low complexity predominate over residues 386 to 398 (SSASESSLPAAVA). The segment covering 454–463 (PAKPPLPPGP) has biased composition (pro residues). The segment covering 504-514 (EIYELYDDVEP) has biased composition (acidic residues). Residues 515–528 (RDDSSPSPKGRDEA) show a composition bias toward basic and acidic residues. One can recognise an SH3 domain in the interval 571-649 (KAEREFRKKF…PRTALLPLET (79 aa)).

As to quaternary structure, interacts with SKAP2, LCP2 and DBNL. May interact with LYN. Interacts with NEK6. In terms of processing, may be phosphorylated on tyrosines. As to expression, expressed in peripheral blood leukocytes and bone marrow. Expressed in monocytes, and to a lesser extent in granulocytes and lymphocytes. Not expressed in non hematopoietic tissues except in lung.

May be involved in myeloid differentiation. May be involved in integrin signaling in neutrophils. Binds to PtdIns(4)P. The sequence is that of PML-RARA-regulated adapter molecule 1 (PRAM1) from Homo sapiens (Human).